Consider the following 206-residue polypeptide: Large ribosomal subunit protein uL4 (206 aa).

The interval 47–77 is disordered; sequence TRAQKGRSDVTGSTRKQWRQKGTGRARTGAA.

This sequence belongs to the universal ribosomal protein uL4 family. Part of the 50S ribosomal subunit.

In terms of biological role, one of the primary rRNA binding proteins, this protein initially binds near the 5'-end of the 23S rRNA. It is important during the early stages of 50S assembly. It makes multiple contacts with different domains of the 23S rRNA in the assembled 50S subunit and ribosome. Its function is as follows. Forms part of the polypeptide exit tunnel. In Nitrosomonas europaea (strain ATCC 19718 / CIP 103999 / KCTC 2705 / NBRC 14298), this protein is Large ribosomal subunit protein uL4.